A 973-amino-acid polypeptide reads, in one-letter code: Putative cell agglutination protein pfl3 (973 aa).

The N-terminal stretch at 1–24 is a signal peptide; the sequence is MSLFPQILLRLLFLAFTLKSTSNA. Residues Asn75, Asn96, Asn147, Asn171, Asn184, Asn218, and Asn253 are each glycosylated (N-linked (GlcNAc...) asparagine). 18 consecutive repeat copies span residues 198–232, 233–267, 268–302, 303–337, 338–372, 373–407, 408–442, 443–477, 478–512, 513–547, 548–582, 583–617, 618–652, 653–687, 688–722, 723–757, 758–792, and 793–828. The 18 X 35 AA approximate tandem repeats stretch occupies residues 198–828; the sequence is GTITLTTISG…GTVLQVVPSL (631 aa). N-linked (GlcNAc...) asparagine glycosylation is found at Asn352 and Asn393. One can recognise a DIPSY domain in the interval 820 to 973; it reads TVLQVVPSLF…SNVYFKAVPL (154 aa). Asn848 carries N-linked (GlcNAc...) asparagine glycosylation.

The protein belongs to the mam3/map4 family.

It is found in the cell surface. In terms of biological role, may be involved in agglutination during conjugation or other aspects of colony formation. Induces flocculation when overexpressed. The polypeptide is Putative cell agglutination protein pfl3 (Schizosaccharomyces pombe (strain 972 / ATCC 24843) (Fission yeast)).